The chain runs to 183 residues: uncharacterized protein (183 aa).

A disordered region spans residues 136 to 183 (EPPASVPSKQSGRSDKKKSTRKSPTFRNRPDFRKNKGRQLNKTTKQKK). The span at 170–183 (NKGRQLNKTTKQKK) shows a compositional bias: basic residues.

This is an uncharacterized protein from Homo sapiens (Human).